The sequence spans 294 residues: Transmembrane protein 178B (294 aa).

A signal peptide spans methionine 1 to alanine 23. The next 3 helical transmembrane spans lie at alanine 172–glycine 192, leucine 206–isoleucine 226, and methionine 252–alanine 272.

The protein belongs to the TMEM178 family.

Its subcellular location is the membrane. The protein is Transmembrane protein 178B (tmem178b) of Danio rerio (Zebrafish).